The chain runs to 158 residues: uncharacterized protein (158 aa).

The HTH hxlR-type domain occupies 13–110 (ESVGRALELV…WGDEYLPRPE (98 aa)).

This is an uncharacterized protein from Mycobacterium tuberculosis (strain ATCC 25618 / H37Rv).